Reading from the N-terminus, the 348-residue chain is Nicotinate-nucleotide--dimethylbenzimidazole phosphoribosyltransferase (348 aa).

The active-site Proton acceptor is the Glu-315.

This sequence belongs to the CobT family.

It catalyses the reaction 5,6-dimethylbenzimidazole + nicotinate beta-D-ribonucleotide = alpha-ribazole 5'-phosphate + nicotinate + H(+). It functions in the pathway nucleoside biosynthesis; alpha-ribazole biosynthesis; alpha-ribazole from 5,6-dimethylbenzimidazole: step 1/2. Its function is as follows. Catalyzes the synthesis of alpha-ribazole-5'-phosphate from nicotinate mononucleotide (NAMN) and 5,6-dimethylbenzimidazole (DMB). The protein is Nicotinate-nucleotide--dimethylbenzimidazole phosphoribosyltransferase of Dechloromonas aromatica (strain RCB).